The chain runs to 1613 residues: Myosin-IIIa (1613 aa).

The Protein kinase domain occupies 21–287 (WEIIETIGKG…VSDLLKHKFI (267 aa)). Residues 27 to 35 (IGKGTYGKV) and Lys50 each bind ATP. Asp150 (proton acceptor) is an active-site residue. One can recognise a Myosin motor domain in the interval 338–1052 (KDVDDLATLD…HVEQLNLMRK (715 aa)). The actin-binding stretch occupies residues 933–955 (LMDLLSKMVVGQPHFVRCIKPNN). IQ domains are found at residues 1054–1083 (ATNKLVLIQASVRAFLGARRYQELQQKRKS) and 1081–1110 (RKSSAVIIQSAARGHLVRKQRKEIVDMKNT). Disordered regions lie at residues 1136–1168 (VKKQTENAVPTNESNTSTPNNKESPSAGKTAPF) and 1476–1506 (SGVSKGEEPKILRPPRRPRKPKTLNNPEDST). Residues 1145–1161 (PTNESNTSTPNNKESPS) show a composition bias toward low complexity. The segment at 1398–1476 (EGVHHSKMVD…RHVSTHQYLS (79 aa)) is interaction with MORN4. A compositionally biased stretch (basic residues) spans 1488–1497 (RPPRRPRKPK).

In the C-terminal section; belongs to the TRAFAC class myosin-kinesin ATPase superfamily. Myosin family. This sequence in the N-terminal section; belongs to the protein kinase superfamily. STE Ser/Thr protein kinase family. In terms of assembly, interacts with MORN4. Interacts (via C-terminus) with ESPN and ESPNL. As to expression, expressed in the cochlear hair cells (at protein level). Expressed in utricle hair bundles (at protein level).

The protein resides in the cytoplasm. It localises to the cytoskeleton. It is found in the cell projection. The protein localises to the filopodium tip. Its subcellular location is the stereocilium. The enzyme catalyses L-seryl-[protein] + ATP = O-phospho-L-seryl-[protein] + ADP + H(+). It carries out the reaction L-threonyl-[protein] + ATP = O-phospho-L-threonyl-[protein] + ADP + H(+). The catalysed reaction is ATP + H2O = ADP + phosphate + H(+). In terms of biological role, actin-dependent motor protein with a protein kinase activity, playing an essential role in hearing. Probably plays also a role in vision. Required for normal cochlear hair bundle development and hearing. Plays an important role in the early steps of cochlear hair bundle morphogenesis. Influences the number and lengths of stereocilia to be produced and limits the growth of microvilli within the forming auditory hair bundles thereby contributing to the architecture of the hair bundle, including its staircase pattern. Involved in the elongation of actin in stereocilia tips by transporting the actin regulatory factor ESPN to the plus ends of actin filaments. In Mus musculus (Mouse), this protein is Myosin-IIIa (Myo3a).